The primary structure comprises 218 residues: Adenylate kinase (218 aa).

Residue 10–15 coordinates ATP; that stretch reads GAGKGT. Residues 30–59 are NMP; that stretch reads STGDMLRAAIAKGTPLGLSAQKIMESGGLV. AMP is bound by residues Thr31, Arg36, 57-59, 85-88, and Gln92; these read GLV and GFPR. Residues 122-159 are LID; it reads GRRIHQPSGRVYHVVNQPPKNPGVDDITGEPLIQRDDD. ATP-binding positions include Arg123 and 132–133; that span reads VY. 2 residues coordinate AMP: Arg156 and Arg167. ATP is bound at residue Gly203.

Belongs to the adenylate kinase family. As to quaternary structure, monomer.

It is found in the cytoplasm. It catalyses the reaction AMP + ATP = 2 ADP. It participates in purine metabolism; AMP biosynthesis via salvage pathway; AMP from ADP: step 1/1. Functionally, catalyzes the reversible transfer of the terminal phosphate group between ATP and AMP. Plays an important role in cellular energy homeostasis and in adenine nucleotide metabolism. This Legionella pneumophila (strain Lens) protein is Adenylate kinase.